Consider the following 417-residue polypeptide: Calreticulin (417 aa).

The signal sequence occupies residues 1 to 17 (MLLSVPLLLGLLGLAVA). An N-domain region spans residues 18 to 197 (EPAVYFKEQF…NSQVESGSLE (180 aa)). Residue Gln26 coordinates Ca(2+). Lys48 is subject to N6-acetyllysine. The Ca(2+) site is built by Lys62 and Lys64. Lys64 carries the N6-(2-hydroxyisobutyryl)lysine modification. The cysteines at positions 105 and 137 are disulfide-linked. Tyr109, Lys111, Tyr128, and Asp135 together coordinate an alpha-D-glucoside. The residue at position 159 (Lys159) is an N6-acetyllysine. Residues 191 to 202 (VESGSLEDDWDF) form a 1-1 repeat. A 4 X approximate repeats region spans residues 191–255 (VESGSLEDDW…DAKKPEDWDE (65 aa)). A disordered region spans residues 193 to 278 (SGSLEDDWDF…PEYKGEWKPR (86 aa)). Residues 198-308 (DDWDFLPPKK…YSPDPSIYAY (111 aa)) form a P-domain region. Positions 207–251 (KIKDPDASKPEDWDERAKIDDPTDSKPEDWDKPEHIPDPDAKKPE) are enriched in basic and acidic residues. Position 209 is an N6-acetyllysine (Lys209). 6 tandem repeats follow at residues 210–221 (DPDASKPEDWDE), 227–238 (DPTDSKPEDWDK), 244–255 (DPDAKKPEDWDE), 259–269 (GEWEPPVIQNP), 273–283 (GEWKPRQIDNP), and 287–297 (GTWIHPEIDNP). The interaction with PPIB stretch occupies residues 237–270 (DKPEHIPDPDAKKPEDWDEEMDGEWEPPVIQNPE). The span at 252 to 261 (DWDEEMDGEW) shows a compositional bias: acidic residues. The tract at residues 259 to 297 (GEWEPPVIQNPEYKGEWKPRQIDNPDYKGTWIHPEIDNP) is 3 X approximate repeats. Residues 309–417 (DNFGVLGLDL…DVPGQAKDEL (109 aa)) form a C-domain region. Residue Asp317 coordinates an alpha-D-glucoside. Asp328 lines the Ca(2+) pocket. N-linked (GlcNAc...) asparagine glycosylation occurs at Asn344. A disordered region spans residues 350–417 (TKAAEKQMKD…DVPGQAKDEL (68 aa)). Basic and acidic residues predominate over residues 352 to 379 (AAEKQMKDKQDEEQRLKEEEEDKKRKEE). Over residues 380-409 (EEAEDKEDDEDKDEDEEDEEDKEEDEEEDV) the composition is skewed to acidic residues. A Prevents secretion from ER motif is present at residues 414-417 (KDEL).

The protein belongs to the calreticulin family. In terms of assembly, monomer. Component of an EIF2 complex at least composed of CELF1/CUGBP1, CALR, CALR3, EIF2S1, EIF2S2, HSP90B1 and HSPA5. Interacts with PDIA3/ERp57 and SPACA9. Interacts with TRIM21. Interacts with NR3C1. Interacts with PPIB. Interacts (via P-domain) with PDIA5. Interacts with GABARAP. Interacts with HLA-E-B2M and HLA-G-B2M complexes. Interacts with HLA-F. Interacts with CLCC1.

The protein localises to the endoplasmic reticulum lumen. It localises to the cytoplasm. The protein resides in the cytosol. Its subcellular location is the secreted. It is found in the extracellular space. The protein localises to the extracellular matrix. It localises to the cell surface. The protein resides in the sarcoplasmic reticulum lumen. Its subcellular location is the cytoplasmic vesicle. It is found in the secretory vesicle. The protein localises to the cortical granule. It localises to the cytolytic granule. Its function is as follows. Calcium-binding chaperone that promotes folding, oligomeric assembly and quality control in the endoplasmic reticulum (ER) via the calreticulin/calnexin cycle. This lectin interacts transiently with almost all of the monoglucosylated glycoproteins that are synthesized in the ER. Interacts with the DNA-binding domain of NR3C1 and mediates its nuclear export. Involved in maternal gene expression regulation. May participate in oocyte maturation via the regulation of calcium homeostasis. Present in the cortical granules of non-activated oocytes, is exocytosed during the cortical reaction in response to oocyte activation and might participate in the block to polyspermy. In Homo sapiens (Human), this protein is Calreticulin.